The chain runs to 509 residues: Light-independent protochlorophyllide reductase subunit B (509 aa).

[4Fe-4S] cluster is bound at residue D36. D295 (proton donor) is an active-site residue. 430–431 contributes to the substrate binding site; that stretch reads GM.

Belongs to the ChlB/BchB/BchZ family. Protochlorophyllide reductase is composed of three subunits; ChlL, ChlN and ChlB. Forms a heterotetramer of two ChlB and two ChlN subunits. [4Fe-4S] cluster serves as cofactor.

The protein localises to the plastid. The protein resides in the chloroplast. The enzyme catalyses chlorophyllide a + oxidized 2[4Fe-4S]-[ferredoxin] + 2 ADP + 2 phosphate = protochlorophyllide a + reduced 2[4Fe-4S]-[ferredoxin] + 2 ATP + 2 H2O. Its pathway is porphyrin-containing compound metabolism; chlorophyll biosynthesis (light-independent). Functionally, component of the dark-operative protochlorophyllide reductase (DPOR) that uses Mg-ATP and reduced ferredoxin to reduce ring D of protochlorophyllide (Pchlide) to form chlorophyllide a (Chlide). This reaction is light-independent. The NB-protein (ChlN-ChlB) is the catalytic component of the complex. In Mesostigma viride (Green alga), this protein is Light-independent protochlorophyllide reductase subunit B.